Reading from the N-terminus, the 801-residue chain is Phenylalanine--tRNA ligase beta subunit (801 aa).

Residues 39–154 enclose the tRNA-binding domain; it reads LKMPQKVVVG…GHLELGVELG (116 aa). Positions 398–475 constitute a B5 domain; sequence IDEITIKTTF…RIYGIDNVSS (78 aa). Positions 453, 459, 462, and 463 each coordinate Mg(2+). Residues 708-800 form the FDX-ACB domain; sequence SKYQKSTRDL…LVREFDAVLR (93 aa).

This sequence belongs to the phenylalanyl-tRNA synthetase beta subunit family. Type 1 subfamily. Tetramer of two alpha and two beta subunits. Mg(2+) serves as cofactor.

Its subcellular location is the cytoplasm. It carries out the reaction tRNA(Phe) + L-phenylalanine + ATP = L-phenylalanyl-tRNA(Phe) + AMP + diphosphate + H(+). This Helicobacter hepaticus (strain ATCC 51449 / 3B1) protein is Phenylalanine--tRNA ligase beta subunit.